Consider the following 215-residue polypeptide: Protein slowmo (215 aa).

Positions 1-170 (MKIWTSEHIF…VIGLINTEVK (170 aa)) constitute a PRELI/MSF1 domain.

It belongs to the slowmo family. Expressed in specific tissues such as the developing central nervous system (CNS) and both the male and female germline. In the CNS, it is restricted in a subset of cells during embryogenesis and early larval development. In embryos, it is also expressed in salivary glands. In the testis, expressed in somatic cyst cells throughout the distal region where the mitotic cysts develop, extending through to meiotic cysts.

It localises to the mitochondrion. Required to regulate peristaltic movement and also for germline proliferation in males and females. The polypeptide is Protein slowmo (slmo) (Drosophila melanogaster (Fruit fly)).